The chain runs to 307 residues: MMEVTFLGTSSAVPSKNRNHTSIALRIPGEIFLFDCGEGTQRQMALAGISPMKVTRIFITHLHGDHILGIPGMIQSMGFRGREEPLDIYGPPGIHELHECIMKMGYFTLDFDINVHEVRGGTVVEEDDYRVTSAPASHSVFNLAYCFEEKKRPRFLREKAIALGLKPGPAFGKLHRGIPVRVGDRIIMPEEVLGSPRKGVKVCYSGDTRPCESVIKLAEGAELLIHESTLEAGSEDKAAESGHSTAREAAEVARSAGVKRLILTHLSTRYKRTEVILEAARQVFPVTDVADDLMTVEVKAYDSSPDS.

Zn(2+) contacts are provided by His-61, His-63, Asp-65, His-66, His-138, Asp-207, and His-265. The Proton acceptor role is filled by Asp-65.

Belongs to the RNase Z family. As to quaternary structure, homodimer. Zn(2+) serves as cofactor.

It carries out the reaction Endonucleolytic cleavage of RNA, removing extra 3' nucleotides from tRNA precursor, generating 3' termini of tRNAs. A 3'-hydroxy group is left at the tRNA terminus and a 5'-phosphoryl group is left at the trailer molecule.. Its function is as follows. Zinc phosphodiesterase, which displays some tRNA 3'-processing endonuclease activity. Probably involved in tRNA maturation, by removing a 3'-trailer from precursor tRNA. The polypeptide is Ribonuclease Z (Methanothermobacter thermautotrophicus (strain ATCC 29096 / DSM 1053 / JCM 10044 / NBRC 100330 / Delta H) (Methanobacterium thermoautotrophicum)).